A 380-amino-acid polypeptide reads, in one-letter code: Chaperone protein DnaJ (380 aa).

The 65-residue stretch at 5 to 69 folds into the J domain; it reads DYYEILGVSK…QKRAHYDQFG (65 aa). A CR-type zinc finger spans residues 135–217; the sequence is GKETDIEIPR…CGGTGRVKKR (83 aa). C148, C151, C165, C168, C191, C194, C205, and C208 together coordinate Zn(2+). 4 CXXCXGXG motif repeats span residues 148-155, 165-172, 191-198, and 205-212; these read CDTCHGTG, CSYCHGTG, CPYCGGTG, and CTTCGGTG.

Belongs to the DnaJ family. Homodimer. The cofactor is Zn(2+).

Its subcellular location is the cytoplasm. Participates actively in the response to hyperosmotic and heat shock by preventing the aggregation of stress-denatured proteins and by disaggregating proteins, also in an autonomous, DnaK-independent fashion. Unfolded proteins bind initially to DnaJ; upon interaction with the DnaJ-bound protein, DnaK hydrolyzes its bound ATP, resulting in the formation of a stable complex. GrpE releases ADP from DnaK; ATP binding to DnaK triggers the release of the substrate protein, thus completing the reaction cycle. Several rounds of ATP-dependent interactions between DnaJ, DnaK and GrpE are required for fully efficient folding. Also involved, together with DnaK and GrpE, in the DNA replication of plasmids through activation of initiation proteins. This Geobacillus sp. (strain WCH70) protein is Chaperone protein DnaJ.